Consider the following 282-residue polypeptide: F-box protein VBF (282 aa).

Residues 1–44 (MMMLPEACIANILAFTSPADAFSSSEVSSVFRLAGDSDFVWEKF) enclose the F-box domain.

As to quaternary structure, component of SCF(VBF) E3 ubiquitin ligase complex that interacts with VIP1. Interacts directly with SKP1A and VIP1. Forms a complex composed of VIP1, VBF and Agrobacterium virE2.

In terms of biological role, component of SCF(VBF) E3 ubiquitin ligase complexes, which mediate the ubiquitination and subsequent proteasomal degradation of target proteins such as VIP1 and Agrobacterium virE2, after their implication in T-DNA translocation to the host nucleus (can functionally replace Agrobacterium VirF). Required during Agrobacterium-induced tumor formation. This is F-box protein VBF (VBF) from Arabidopsis thaliana (Mouse-ear cress).